The sequence spans 404 residues: Acetylornithine aminotransferase (404 aa).

Pyridoxal 5'-phosphate is bound by residues Gly-113–Thr-114 and Phe-139. Arg-142 is a binding site for N(2)-acetyl-L-ornithine. Asp-224–Gln-227 contributes to the pyridoxal 5'-phosphate binding site. Lys-253 bears the N6-(pyridoxal phosphate)lysine mark. Ser-281 contributes to the N(2)-acetyl-L-ornithine binding site. Residue Thr-282 participates in pyridoxal 5'-phosphate binding.

It belongs to the class-III pyridoxal-phosphate-dependent aminotransferase family. ArgD subfamily. In terms of assembly, homodimer. Pyridoxal 5'-phosphate is required as a cofactor.

Its subcellular location is the cytoplasm. It carries out the reaction N(2)-acetyl-L-ornithine + 2-oxoglutarate = N-acetyl-L-glutamate 5-semialdehyde + L-glutamate. The protein operates within amino-acid biosynthesis; L-arginine biosynthesis; N(2)-acetyl-L-ornithine from L-glutamate: step 4/4. This Mycobacterium leprae (strain TN) protein is Acetylornithine aminotransferase.